Here is a 277-residue protein sequence, read N- to C-terminus: Phosphate import ATP-binding protein PstB (277 aa).

An ABC transporter domain is found at 31 to 272 (IEVPGLSLFY…PAKKQTEDYI (242 aa)). 63 to 70 (GPSGCGKS) provides a ligand contact to ATP.

This sequence belongs to the ABC transporter superfamily. Phosphate importer (TC 3.A.1.7) family. The complex is composed of two ATP-binding proteins (PstB), two transmembrane proteins (PstC and PstA) and a solute-binding protein (PstS).

The protein resides in the cell inner membrane. The enzyme catalyses phosphate(out) + ATP + H2O = ADP + 2 phosphate(in) + H(+). Part of the ABC transporter complex PstSACB involved in phosphate import. Responsible for energy coupling to the transport system. This chain is Phosphate import ATP-binding protein PstB, found in Pseudomonas fluorescens (strain Pf0-1).